A 132-amino-acid polypeptide reads, in one-letter code: Small ribosomal subunit protein uS8 (132 aa).

Belongs to the universal ribosomal protein uS8 family. In terms of assembly, part of the 30S ribosomal subunit. Contacts proteins S5 and S12.

Functionally, one of the primary rRNA binding proteins, it binds directly to 16S rRNA central domain where it helps coordinate assembly of the platform of the 30S subunit. This is Small ribosomal subunit protein uS8 from Leuconostoc mesenteroides subsp. mesenteroides (strain ATCC 8293 / DSM 20343 / BCRC 11652 / CCM 1803 / JCM 6124 / NCDO 523 / NBRC 100496 / NCIMB 8023 / NCTC 12954 / NRRL B-1118 / 37Y).